Reading from the N-terminus, the 61-residue chain is Alpha-conotoxin PnIB (61 aa).

Positions 1-21 (MGMRMMFTVFLLVVLATTVVS) are cleaved as a signal peptide. Positions 22–44 (FTSDRASDDGNAAASDLIALTIK) are excised as a propeptide. 2 disulfide bridges follow: Cys-46–Cys-52 and Cys-47–Cys-60. The interval 48–50 (SLP) is ser-Xaa-Pro motif, crucial for potent interaction with nAChR. A Sulfotyrosine modification is found at Tyr-59. Residue Cys-60 is modified to Cysteine amide.

The protein belongs to the conotoxin A superfamily. In terms of tissue distribution, expressed by the venom duct.

The protein localises to the secreted. Alpha-conotoxins act on postsynaptic membranes, they bind to the nicotinic acetylcholine receptors (nAChR) and thus inhibit them. This toxin blocks mammalian nAChRs (alpha-7/CHRNA7 &gt; alpha-3-beta-2/CHRNA3-CHRNB2). This Conus pennaceus (Feathered cone) protein is Alpha-conotoxin PnIB.